A 360-amino-acid chain; its full sequence is DNA replication and repair protein RecF (360 aa).

30-37 is a binding site for ATP; the sequence is GQNGSGKT.

The protein belongs to the RecF family.

The protein resides in the cytoplasm. In terms of biological role, the RecF protein is involved in DNA metabolism; it is required for DNA replication and normal SOS inducibility. RecF binds preferentially to single-stranded, linear DNA. It also seems to bind ATP. This chain is DNA replication and repair protein RecF, found in Shewanella baltica (strain OS155 / ATCC BAA-1091).